The chain runs to 549 residues: Teichoic acids export ATP-binding protein TagH (549 aa).

The ABC transporter domain maps to 22 to 243 (DKLKDLFRKQ…YRAFLKEYNQ (222 aa)). Residue 57–64 (GLNGSGKS) participates in ATP binding. The segment at 244–549 (MSMEDRKKFQ…EIQSISIVKK (306 aa)) is unknown. Residues 346 to 415 (ENMYMVKSNG…VSTKFIEPFK (70 aa)) form the SH3b domain.

The protein belongs to the ABC transporter superfamily. Teichoic acids exporter (TC 3.A.1.104.1) family. As to quaternary structure, the complex is composed of two ATP-binding proteins (TagH) and two transmembrane proteins (TagG).

It is found in the cell membrane. It carries out the reaction ATP + H2O + teichoic acidSide 1 = ADP + phosphate + teichoic acidSide 2.. Its function is as follows. Part of the ABC transporter complex TagGH involved in teichoic acids export. Responsible for energy coupling to the transport system. The chain is Teichoic acids export ATP-binding protein TagH from Bacillus cereus (strain ZK / E33L).